The chain runs to 105 residues: Circadian clock oscillator protein KaiB (105 aa).

Belongs to the KaiB family. May undergo a major conformational rearrangment; in the free state forms homooligomers. When bound to KaiC switches to a monomeric thioredoxin-fold (KaiB(fs)). The active oscillator complex is probably KaiC(6):KaiB(6).

Component of the KaiBC clock protein complex, which constitutes the main circadian regulator in cyanobacteria; it may modify the ATPase activity of KaiC. Its function is as follows. May be a metamorphic protein which reversibly switches between an inactive tetrameric fold and a rare, thioredoxin-like monomeric fold (KaiB(fs)). KaiB(fs) binds phospho-KaiC, and perhaps clock output effectors. This Prochlorococcus marinus (strain MIT 9312) protein is Circadian clock oscillator protein KaiB.